Reading from the N-terminus, the 396-residue chain is Probable sugar efflux transporter (396 aa).

Helical transmembrane passes span 15-35 (VVTL…PVGL), 50-70 (VGIM…PFML), 81-101 (LICL…SWSF), 103-123 (VLVI…SITA), 136-156 (AQAL…GLPL), 170-190 (FFAI…LLPL), 209-229 (PALM…YTAY), 246-266 (FATA…VIFG), 275-295 (ALVS…LPAA), 299-319 (IHLG…GLGM), 333-353 (VAMA…ALVG), and 364-384 (MIGY…IIIF).

It belongs to the major facilitator superfamily. SotB (TC 2.A.1.2) family.

Its subcellular location is the cell inner membrane. Its function is as follows. Involved in the efflux of sugars. The physiological role may be the reduction of the intracellular concentration of toxic sugars or sugar metabolites. This chain is Probable sugar efflux transporter, found in Shigella flexneri serotype 5b (strain 8401).